A 186-amino-acid polypeptide reads, in one-letter code: Oligoribonuclease (186 aa).

In terms of domain architecture, Exonuclease spans 12–175 (LIWIDLEMTG…DDIKDSIKEL (164 aa)). The active site involves Tyr133.

This sequence belongs to the oligoribonuclease family.

The protein resides in the cytoplasm. 3'-to-5' exoribonuclease specific for small oligoribonucleotides. The protein is Oligoribonuclease of Wigglesworthia glossinidia brevipalpis.